Here is a 739-residue protein sequence, read N- to C-terminus: Adhesion G protein-coupled receptor L4 (739 aa).

A signal peptide spans 1–19 (MRLLPLLVGFSTLLNCSYT). One can recognise an EGF-like 1 domain in the interval 20–57 (QNCSKTTCLPNAKCEVHNGVEACFCSQGYSGNGVTICE). Residues 20–481 (QNCSKTTCLP…DYNILTRITQ (462 aa)) lie on the Extracellular side of the membrane. N21 carries an N-linked (GlcNAc...) asparagine glycan. 9 cysteine pairs are disulfide-bonded: C22/C33, C27/C42, C44/C56, C62/C74, C68/C83, C85/C106, C112/C124, C118/C133, and C135/C156. Residues 58 to 107 (DIDECSESSVCGDHAVCENVNGGFSCFCREGYQTATGKSQFTPNDGSYCQ) enclose the EGF-like 2; calcium-binding domain. Residues 108–157 (DIDECSESSVCGDHAVCENVNGGFSCFCREGYQTATGKSQFTPNDGSYCQ) enclose the EGF-like 3; calcium-binding domain. Residues N176, N226, N237, N298, N422, N430, and N444 are each glycosylated (N-linked (GlcNAc...) asparagine). Residues 293–468 (SQFDMNSTDL…AILMSSTSSI (176 aa)) enclose the GAIN-B domain. Disulfide bonds link C418–C450 and C438–C452. The interval 418 to 468 (CAFWNYSVDAMNNGSWSTEGCELTHSNDTHTSCRCSHLTHFAILMSSTSSI) is GPS. Residues 482–502 (LGIIISLICLAICIFTFWFFS) form a helical membrane-spanning segment. Residues 503-513 (EIQSTRTTIHK) are Cytoplasmic-facing. The helical transmembrane segment at 514–534 (NLCCSLFLAELVFLIGININT) threads the bilayer. The Extracellular segment spans residues 535–548 (NKLVCSIIAGLLHY). Residues 549–569 (FFLAAFAWMCIEGIHLYLIVV) traverse the membrane as a helical segment. Residues 570 to 581 (GVIYNKGFLHKN) lie on the Cytoplasmic side of the membrane. A helical membrane pass occupies residues 582-602 (FYIFGYLSPAVVVGFSASLGY). Residues 603–622 (RYYGTTKVCWLSTENNFIWS) lie on the Extracellular side of the membrane. The chain crosses the membrane as a helical span at residues 623 to 643 (FIGPACLIILVNLLAFGVIIY). Residues 644-667 (KVFRHTAGLKPEVSCYENIRSCAR) are Cytoplasmic-facing. A helical membrane pass occupies residues 668–688 (GALALLFLLGTTWIFGVLHVV). Residues 689-695 (HASVVTA) are Extracellular-facing. The chain crosses the membrane as a helical span at residues 696–716 (YLFTVSNAFQGMFIFLFLCVL). Residues 717–739 (SRKIQEEYYRLFKNVPCCFGCLR) are Cytoplasmic-facing.

It belongs to the G-protein coupled receptor 2 family. Adhesion G-protein coupled receptor (ADGR) subfamily. As to quaternary structure, heterodimer of 2 chains generated by proteolytic processing; the large extracellular N-terminal fragment and the membrane-bound C-terminal fragment predominantly remain associated and non-covalently linked. Post-translationally, glycosylated. Proteolytically cleaved into 2 subunits, an extracellular alpha subunit and a seven-transmembrane subunit.

The protein resides in the cell membrane. In terms of biological role, endothelial orphan receptor that acts as a key regulator of angiogenesis. This chain is Adhesion G protein-coupled receptor L4 (Adgrl4), found in Mus musculus (Mouse).